Consider the following 474-residue polypeptide: tRNA-2-methylthio-N(6)-dimethylallyladenosine synthase (474 aa).

Residues 3 to 120 enclose the MTTase N-terminal domain; sequence KKLHIKTWGC…LPEMINSVRG (118 aa). Cys12, Cys49, Cys83, Cys157, Cys161, and Cys164 together coordinate [4Fe-4S] cluster. A Radical SAM core domain is found at 143 to 375; that stretch reads RAEGPTAFVS…QERINQQAMA (233 aa). In terms of domain architecture, TRAM spans 378–441; the sequence is RRMLGTTQRI…PNSLRGKVVR (64 aa).

This sequence belongs to the methylthiotransferase family. MiaB subfamily. In terms of assembly, monomer. [4Fe-4S] cluster is required as a cofactor.

The protein localises to the cytoplasm. It carries out the reaction N(6)-dimethylallyladenosine(37) in tRNA + (sulfur carrier)-SH + AH2 + 2 S-adenosyl-L-methionine = 2-methylsulfanyl-N(6)-dimethylallyladenosine(37) in tRNA + (sulfur carrier)-H + 5'-deoxyadenosine + L-methionine + A + S-adenosyl-L-homocysteine + 2 H(+). In terms of biological role, catalyzes the methylthiolation of N6-(dimethylallyl)adenosine (i(6)A), leading to the formation of 2-methylthio-N6-(dimethylallyl)adenosine (ms(2)i(6)A) at position 37 in tRNAs that read codons beginning with uridine. This chain is tRNA-2-methylthio-N(6)-dimethylallyladenosine synthase, found in Salmonella paratyphi A (strain ATCC 9150 / SARB42).